The chain runs to 440 residues: Tryptophan synthase beta chain 2 (440 aa).

N6-(pyridoxal phosphate)lysine is present on K110.

It belongs to the TrpB family. Tetramer of two alpha and two beta chains. The cofactor is pyridoxal 5'-phosphate.

The catalysed reaction is (1S,2R)-1-C-(indol-3-yl)glycerol 3-phosphate + L-serine = D-glyceraldehyde 3-phosphate + L-tryptophan + H2O. It functions in the pathway amino-acid biosynthesis; L-tryptophan biosynthesis; L-tryptophan from chorismate: step 5/5. Functionally, the beta subunit is responsible for the synthesis of L-tryptophan from indole and L-serine. This is Tryptophan synthase beta chain 2 (trpB2) from Pyrococcus abyssi (strain GE5 / Orsay).